A 1940-amino-acid polypeptide reads, in one-letter code: Myosin-3 (1940 aa).

A Myosin N-terminal SH3-like domain is found at 33 to 82 (DAKTYCFVVDSKEEYAKGKIKSSQDGKVTVETEDNRTLVVKPEDVYAMNP). Positions 86–779 (DRIEDMAMLT…LLGTLEEMRD (694 aa)) constitute a Myosin motor domain. Lysine 130 bears the N6,N6,N6-trimethyllysine mark. Position 179–186 (179–186 (GESGAGKT)) interacts with ATP. 2 actin-binding regions span residues 656–678 (LNKL…IPNE) and 758–772 (KFGH…GLLG). Residues 782–811 (LAKLITRTQAVCRGFLMRVEFQKMVQRRES) form the IQ domain. Positions 840–1933 (LLKSAETEKE…KTRDFTSSRM (1094 aa)) form a coiled coil.

It belongs to the TRAFAC class myosin-kinesin ATPase superfamily. Myosin family. As to quaternary structure, muscle myosin is a hexameric protein that consists of 2 heavy chain subunits (MHC), 2 alkali light chain subunits (MLC) and 2 regulatory light chain subunits (MLC-2). Expressed in fetal bone, thymus, placenta, heart, brain, and liver.

The protein resides in the cytoplasm. It is found in the myofibril. Functionally, muscle contraction. The protein is Myosin-3 (MYH3) of Homo sapiens (Human).